The sequence spans 205 residues: Small ribosomal subunit protein uS4 (205 aa).

The tract at residues 14–49 is disordered; it reads RMGENIWGRPKSPVNRREYGPGQHGQRRKGKMSDFG. The S4 RNA-binding domain maps to 94–157; that stretch reads SRLDAIVYRA…KQLVTVLEAV (64 aa).

It belongs to the universal ribosomal protein uS4 family. In terms of assembly, part of the 30S ribosomal subunit. Contacts protein S5. The interaction surface between S4 and S5 is involved in control of translational fidelity.

Its function is as follows. One of the primary rRNA binding proteins, it binds directly to 16S rRNA where it nucleates assembly of the body of the 30S subunit. Functionally, with S5 and S12 plays an important role in translational accuracy. In Agrobacterium fabrum (strain C58 / ATCC 33970) (Agrobacterium tumefaciens (strain C58)), this protein is Small ribosomal subunit protein uS4.